We begin with the raw amino-acid sequence, 212 residues long: Small ribosomal subunit protein uS19m (212 aa).

The transit peptide at 1-29 directs the protein to the mitochondrion; the sequence is MAFCTKLGGHWKQGVNVPVSSMLGSLRYM. The RRM domain maps to 31–109; that stretch reads TKLYIGGLSP…FNISVNVAKD (79 aa).

It belongs to the universal ribosomal protein uS19 family. Component of the mitochondrial ribosome small subunit.

The protein resides in the mitochondrion. The RNA-binding domain found in RPS19 may functionally replace the missing mitochondrial RPS13. This Arabidopsis thaliana (Mouse-ear cress) protein is Small ribosomal subunit protein uS19m (RPS19).